Consider the following 414-residue polypeptide: Probable cell wall biosynthesis protein LcpB (414 aa).

A disordered region spans residues 1 to 108; that stretch reads MDSPGQGEIA…PPVIAGDGGR (108 aa). The Cytoplasmic portion of the chain corresponds to 1 to 120; sequence MDSPGQGEIA…KAISFKPRGC (120 aa). Over residues 9 to 23 the composition is skewed to basic and acidic residues; that stretch reads IARDSQGRPILDRYG. The span at 33-42 shows a compositional bias: pro residues; the sequence is RQTPPTPRTP. Positions 43 to 53 are enriched in low complexity; that stretch reads PVNETRVYQPR. Residues 54-80 show a composition bias toward pro residues; the sequence is QTPPRQTPPRQTPPRQMPPRQTPPRQV. Residues 121–141 traverse the membrane as a helical segment; sequence LGTIAGVLAVGLVLVFVVTLW. The Periplasmic segment spans residues 142 to 414; it reads ADSKLNRVDA…GAEALFSSMR (273 aa).

Belongs to the LytR/CpsA/Psr (LCP) family.

The protein resides in the cell inner membrane. This chain is Probable cell wall biosynthesis protein LcpB, found in Corynebacterium glutamicum (strain ATCC 13032 / DSM 20300 / JCM 1318 / BCRC 11384 / CCUG 27702 / LMG 3730 / NBRC 12168 / NCIMB 10025 / NRRL B-2784 / 534).